The chain runs to 250 residues: DNA repair protein RecO (250 aa).

This sequence belongs to the RecO family.

In terms of biological role, involved in DNA repair and RecF pathway recombination. The sequence is that of DNA repair protein RecO from Syntrophobacter fumaroxidans (strain DSM 10017 / MPOB).